A 94-amino-acid polypeptide reads, in one-letter code: Small ribosomal subunit protein uS17 (94 aa).

Belongs to the universal ribosomal protein uS17 family. As to quaternary structure, part of the 30S ribosomal subunit.

One of the primary rRNA binding proteins, it binds specifically to the 5'-end of 16S ribosomal RNA. This is Small ribosomal subunit protein uS17 from Streptomyces griseus subsp. griseus (strain JCM 4626 / CBS 651.72 / NBRC 13350 / KCC S-0626 / ISP 5235).